The chain runs to 176 residues: Dual specificity phosphatase 28 (176 aa).

Residues Pro17–Ala159 form the Tyrosine-protein phosphatase domain. Cys103 acts as the Phosphocysteine intermediate in catalysis.

The protein belongs to the protein-tyrosine phosphatase family. Non-receptor class dual specificity subfamily. In terms of assembly, monomer.

It catalyses the reaction O-phospho-L-tyrosyl-[protein] + H2O = L-tyrosyl-[protein] + phosphate. The catalysed reaction is O-phospho-L-seryl-[protein] + H2O = L-seryl-[protein] + phosphate. It carries out the reaction O-phospho-L-threonyl-[protein] + H2O = L-threonyl-[protein] + phosphate. In terms of biological role, has phosphatase activity with the synthetic substrate 6,8-difluoro-4-methylumbelliferyl phosphate (in vitro). Has almost no detectable activity with phosphotyrosine, even less activity with phosphothreonine and displays complete lack of activity with phosphoserine. The poor activity with phosphotyrosine may be due to steric hindrance by bulky amino acid sidechains that obstruct access to the active site. This Homo sapiens (Human) protein is Dual specificity phosphatase 28 (DUSP28).